Here is a 516-residue protein sequence, read N- to C-terminus: Probable serine/threonine-protein kinase ECU02_0550 (516 aa).

In terms of domain architecture, Protein kinase spans 4–230 (YKLRQVIGEG…ASEALMHRSF (227 aa)). Residues 10–18 (IGEGASSTV) and K32 contribute to the ATP site. D120 acts as the Proton acceptor in catalysis.

The protein belongs to the protein kinase superfamily. CAMK Ser/Thr protein kinase family.

It carries out the reaction L-seryl-[protein] + ATP = O-phospho-L-seryl-[protein] + ADP + H(+). It catalyses the reaction L-threonyl-[protein] + ATP = O-phospho-L-threonyl-[protein] + ADP + H(+). This is Probable serine/threonine-protein kinase ECU02_0550 from Encephalitozoon cuniculi (strain GB-M1) (Microsporidian parasite).